A 594-amino-acid chain; its full sequence is Aspartate--tRNA(Asp/Asn) ligase (594 aa).

Glu175 provides a ligand contact to L-aspartate. Residues 199-202 form an aspartate region; the sequence is QQLK. Arg221 serves as a coordination point for L-aspartate. Residues 221-223 and Gln230 each bind ATP; that span reads RDE. His450 lines the L-aspartate pocket. Residue Glu485 coordinates ATP. Arg492 provides a ligand contact to L-aspartate. 537-540 contributes to the ATP binding site; that stretch reads GIDR.

The protein belongs to the class-II aminoacyl-tRNA synthetase family. Type 1 subfamily. Homodimer.

Its subcellular location is the cytoplasm. The enzyme catalyses tRNA(Asx) + L-aspartate + ATP = L-aspartyl-tRNA(Asx) + AMP + diphosphate. Aspartyl-tRNA synthetase with relaxed tRNA specificity since it is able to aspartylate not only its cognate tRNA(Asp) but also tRNA(Asn). Reaction proceeds in two steps: L-aspartate is first activated by ATP to form Asp-AMP and then transferred to the acceptor end of tRNA(Asp/Asn). The sequence is that of Aspartate--tRNA(Asp/Asn) ligase from Herpetosiphon aurantiacus (strain ATCC 23779 / DSM 785 / 114-95).